The sequence spans 265 residues: ATP synthase subunit a (265 aa).

A run of 6 helical transmembrane segments spans residues 26 to 46 (VHLD…FFFY), 88 to 108 (IGSL…IDLI), 132 to 152 (DISA…FYTI), 168 to 188 (PFNH…TLLA), 195 to 217 (FRLF…MYMA), and 231 to 251 (LIWA…FMML).

It belongs to the ATPase A chain family. In terms of assembly, F-type ATPases have 2 components, CF(1) - the catalytic core - and CF(0) - the membrane proton channel. CF(1) has five subunits: alpha(3), beta(3), gamma(1), delta(1), epsilon(1). CF(0) has three main subunits: a(1), b(2) and c(9-12). The alpha and beta chains form an alternating ring which encloses part of the gamma chain. CF(1) is attached to CF(0) by a central stalk formed by the gamma and epsilon chains, while a peripheral stalk is formed by the delta and b chains.

Its subcellular location is the cell inner membrane. In terms of biological role, key component of the proton channel; it plays a direct role in the translocation of protons across the membrane. The protein is ATP synthase subunit a of Histophilus somni (strain 129Pt) (Haemophilus somnus).